Here is a 192-residue protein sequence, read N- to C-terminus: Pyridoxal 5'-phosphate synthase subunit PdxT (192 aa).

50-52 (GES) contacts L-glutamine. The active-site Nucleophile is the Cys-82. L-glutamine-binding positions include Arg-109 and 136-137 (IR). Catalysis depends on charge relay system residues His-172 and Glu-174.

The protein belongs to the glutaminase PdxT/SNO family. As to quaternary structure, in the presence of PdxS, forms a dodecamer of heterodimers. Only shows activity in the heterodimer.

It carries out the reaction aldehydo-D-ribose 5-phosphate + D-glyceraldehyde 3-phosphate + L-glutamine = pyridoxal 5'-phosphate + L-glutamate + phosphate + 3 H2O + H(+). The enzyme catalyses L-glutamine + H2O = L-glutamate + NH4(+). Its pathway is cofactor biosynthesis; pyridoxal 5'-phosphate biosynthesis. Functionally, catalyzes the hydrolysis of glutamine to glutamate and ammonia as part of the biosynthesis of pyridoxal 5'-phosphate. The resulting ammonia molecule is channeled to the active site of PdxS. The polypeptide is Pyridoxal 5'-phosphate synthase subunit PdxT (Haemophilus influenzae (strain PittEE)).